Reading from the N-terminus, the 366-residue chain is Ribosomal RNA large subunit methyltransferase M (366 aa).

Residues Ser-188, 221–224, Asp-240, Asp-260, and Asp-277 contribute to the S-adenosyl-L-methionine site; that span reads CPGG. Lys-306 serves as the catalytic Proton acceptor.

It belongs to the class I-like SAM-binding methyltransferase superfamily. RNA methyltransferase RlmE family. RlmM subfamily. As to quaternary structure, monomer.

The protein resides in the cytoplasm. The catalysed reaction is cytidine(2498) in 23S rRNA + S-adenosyl-L-methionine = 2'-O-methylcytidine(2498) in 23S rRNA + S-adenosyl-L-homocysteine + H(+). In terms of biological role, catalyzes the 2'-O-methylation at nucleotide C2498 in 23S rRNA. The sequence is that of Ribosomal RNA large subunit methyltransferase M from Escherichia coli O127:H6 (strain E2348/69 / EPEC).